Consider the following 1254-residue polypeptide: AF4/FMR2 family member 3 (1254 aa).

The span at Tyr-45–Gln-62 shows a compositional bias: basic and acidic residues. Disordered stretches follow at residues Tyr-45–Leu-90, Ala-139–Gln-190, Arg-261–Asn-324, Glu-350–Asp-534, and Lys-552–Ser-752. 2 stretches are compositionally biased toward polar residues: residues Asp-67–Ser-76 and Ala-143–Pro-158. Residues Lys-359–Ser-369 are compositionally biased toward polar residues. Low complexity predominate over residues Gln-406–Ala-418. The span at Ser-421–Pro-433 shows a compositional bias: polar residues. Residues Ser-441–Ser-472 are compositionally biased toward low complexity. Over residues Lys-552–Pro-561 the composition is skewed to basic and acidic residues. Residues Ser-577 to Thr-605 show a composition bias toward low complexity. The span at Arg-615 to Glu-633 shows a compositional bias: basic and acidic residues. Low complexity-rich tracts occupy residues Thr-694–Asp-704 and Ala-732–Ser-749. Position 782 is a phosphoserine (Ser-782). The tract at residues Pro-813–Asn-883 is disordered. The segment covering Arg-857 to Ala-869 has biased composition (basic and acidic residues). The span at Ala-873–Asn-883 shows a compositional bias: polar residues. A Phosphoserine modification is found at Ser-908. 2 disordered regions span residues Ala-919–Cys-991 and Ala-1128–Ser-1171. 2 stretches are compositionally biased toward polar residues: residues Asp-922–Asn-941 and Ala-960–Ser-985. Composition is skewed to low complexity over residues Pro-1132–Ser-1146 and Pro-1154–Ser-1171.

This sequence belongs to the AF4 family. As to expression, highest levels found in lymphoid tissues, lower levels in brain and lung.

The protein resides in the nucleus. Its function is as follows. Putative transcription activator that may function in lymphoid development and oncogenesis. The polypeptide is AF4/FMR2 family member 3 (Aff3) (Mus musculus (Mouse)).